Reading from the N-terminus, the 82-residue chain is Protein CYSTEINE-RICH TRANSMEMBRANE MODULE 13 (82 aa).

Residues 1 to 58 (MYHQEQHPVGAPPPQGYPPKDGYPPAGYPPAGYPPPGYAQGYPAQGYPPPQYSQAPQQ) form a disordered region. Positions 26–37 (AGYPPAGYPPPG) are enriched in pro residues. The helical transmembrane segment at 59–76 (KQNAGMLEGCLAALCCCC) threads the bilayer.

Belongs to the CYSTM1 family. In terms of assembly, homodimer and heterodimers. Interacts with CYSTM7, CYTSM3, CYTSM4, CYTSM5, CYTSM6, CYTSM9, CYTSM10 and CYTSM11. Binds weakly to CYSTM1 and CYSTM2. As to expression, expressed in root meristem, root vasculature, leaf vasculature and floral organ primordia. Mostly expressed in roots and flowers and, to a lower extent, in stems, siliques and leaves.

It localises to the cell membrane. In terms of biological role, required for the promotion of megasporogenesis, or promotion of germ cell formation from somatic precursor cells. Acts redundantly with WIH2. Functions in a genetic pathway downstream of SPL/NZZ and WUS and together with TRN2 in promoting megasporogenesis. Involved in resistance to abiotic stress. This is Protein CYSTEINE-RICH TRANSMEMBRANE MODULE 13 from Arabidopsis thaliana (Mouse-ear cress).